We begin with the raw amino-acid sequence, 309 residues long: tRNA dimethylallyltransferase (309 aa).

13–20 (GPTAVGKS) serves as a coordination point for ATP. A substrate-binding site is contributed by 15–20 (TAVGKS).

It belongs to the IPP transferase family. Monomer. It depends on Mg(2+) as a cofactor.

The catalysed reaction is adenosine(37) in tRNA + dimethylallyl diphosphate = N(6)-dimethylallyladenosine(37) in tRNA + diphosphate. Catalyzes the transfer of a dimethylallyl group onto the adenine at position 37 in tRNAs that read codons beginning with uridine, leading to the formation of N6-(dimethylallyl)adenosine (i(6)A). The protein is tRNA dimethylallyltransferase of Lacticaseibacillus casei (strain BL23) (Lactobacillus casei).